Here is a 116-residue protein sequence, read N- to C-terminus: Phosphoribosyl-AMP cyclohydrolase (116 aa).

Residue aspartate 80 coordinates Mg(2+). Residue cysteine 81 coordinates Zn(2+). Mg(2+) contacts are provided by aspartate 82 and aspartate 84. The Zn(2+) site is built by cysteine 98 and cysteine 105.

It belongs to the PRA-CH family. Homodimer. It depends on Mg(2+) as a cofactor. Requires Zn(2+) as cofactor.

It is found in the cytoplasm. The enzyme catalyses 1-(5-phospho-beta-D-ribosyl)-5'-AMP + H2O = 1-(5-phospho-beta-D-ribosyl)-5-[(5-phospho-beta-D-ribosylamino)methylideneamino]imidazole-4-carboxamide. The protein operates within amino-acid biosynthesis; L-histidine biosynthesis; L-histidine from 5-phospho-alpha-D-ribose 1-diphosphate: step 3/9. In terms of biological role, catalyzes the hydrolysis of the adenine ring of phosphoribosyl-AMP. In Trichormus variabilis (strain ATCC 29413 / PCC 7937) (Anabaena variabilis), this protein is Phosphoribosyl-AMP cyclohydrolase.